The primary structure comprises 202 residues: Syndecan-4 (202 aa).

The signal sequence occupies residues 1–23 (MAPVCLFAPLLLLLLGGFPVAPG). The Extracellular segment spans residues 24–149 (ESIRETEVID…QGSNIFERTE (126 aa)). 2 disordered regions span residues 42 to 76 (YFSG…TEEP) and 89 to 138 (LDNH…MSST). S44 carries O-linked (Xyl...) (glycosaminoglycan) serine glycosylation. Acidic residues predominate over residues 48–62 (PDDEDAGGLEQDSDF). O-linked (Xyl...) (glycosaminoglycan) serine glycosylation is found at S65 and S67. The span at 105-121 (SEPKELEENEVIPKRVP) shows a compositional bias: basic and acidic residues. The chain crosses the membrane as a helical span at residues 150 to 174 (VLAALIVGGVVGILFAVFLILLLVY). Topologically, residues 175 to 202 (RMKKKDEGSYDLGKKPIYKKAPTNEFYA) are cytoplasmic.

Belongs to the syndecan proteoglycan family. Homodimer. Interacts with CDCP1 and SDCBP. Interacts (via its cytoplasmic domain) with GIPC (via its PDZ domain). Interacts (via its cytoplasmic domain) with NUDT16L1. Interacts with DNM2; this interaction is markedly enhanced at focal ahesion site upon induction of focal adhesions and stress-fiber formation. Post-translationally, shedding is enhanced by a number of factors such as heparanase, thrombin or EGF. Also by stress and wound healing. PMA-mediated shedding is inhibited by TIMP3. In terms of processing, O-glycosylated; contains both chondroitin sulfate and heparan sulfate. Ser-44, Ser-65 and Ser-67 can all be modified by either chondroitin sulfate or heparan sulfate, and the protein exists in forms that contain only chondroitin sulfate, only heparan sulfate and both chondroitin sulfate and heparan sulfate.

The protein resides in the membrane. It localises to the secreted. In terms of biological role, cell surface proteoglycan which regulates exosome biogenesis in concert with SDCBP and PDCD6IP. The chain is Syndecan-4 from Rattus norvegicus (Rat).